The following is a 424-amino-acid chain: Sulfatase ppz1 (424 aa).

Ca(2+) contacts are provided by aspartate 13, aspartate 203, and asparagine 204.

It belongs to the sulfatase family. It depends on Ca(2+) as a cofactor.

Sulfatase; part of the gene cluster that mediates the biosynthesis of pyrrolopyrazines, secondary metabolites showing insecticidal activity. The role of ppz1 within the pathway has still to be determined. The single multifunctional NRPS ppzA is sufficient to produce peramine via condensation of 1-pyrroline-5-carboxylate and arginine, N-methylation of the alpha-amino group of arginine and reduction of the thioester and the cyclization to form an iminium ion resulting in release from the peptide synthetase. Deprotonation of this intermediate and oxidation of the pyrroline ring would give rise to peramine. In Epichloe species that produce only peramine, the peramine synthetase gene is not localized in a gene cluster, in contrast to Metarhizium species that contain additional pyrrolopyrazine biosynthesis genes. The 2-oxoglutarate-Fe(II) type oxidoreductase ppzC hydroxylates peramine to yield the newly identified compound 8-hydroxyperamine whereas ppzD converts L-proline into trans-4-hydroxy-L-proline, a precursor of peramine biosynthesis. This Metarhizium majus (strain ARSEF 297) protein is Sulfatase ppz1.